Consider the following 273-residue polypeptide: 1,4-dihydroxy-2-naphthoyl-CoA synthase (273 aa).

Substrate-binding positions include Arg-34, 73–77 (SGGDQ), Tyr-85, 117–121 (YAVGG), Thr-143, Ser-149, Tyr-246, and Lys-261. Position 142–144 (142–144 (QTG)) interacts with hydrogencarbonate. Positions 254 to 265 (GRDAFKEKRDPD) are enriched in basic and acidic residues. The interval 254-273 (GRDAFKEKRDPDFDQFPKFP) is disordered.

Belongs to the enoyl-CoA hydratase/isomerase family. MenB subfamily. Hydrogencarbonate serves as cofactor.

The catalysed reaction is 2-succinylbenzoyl-CoA + H(+) = 1,4-dihydroxy-2-naphthoyl-CoA + H2O. It participates in quinol/quinone metabolism; 1,4-dihydroxy-2-naphthoate biosynthesis; 1,4-dihydroxy-2-naphthoate from chorismate: step 6/7. It functions in the pathway quinol/quinone metabolism; menaquinone biosynthesis. In terms of biological role, converts o-succinylbenzoyl-CoA (OSB-CoA) to 1,4-dihydroxy-2-naphthoyl-CoA (DHNA-CoA). The sequence is that of 1,4-dihydroxy-2-naphthoyl-CoA synthase from Staphylococcus aureus (strain MSSA476).